Reading from the N-terminus, the 240-residue chain is C-type lectin domain family 4 member A (240 aa).

Over Met1–Thr48 the chain is Cytoplasmic. The short motif at Ile5 to Val10 is the ITIM motif element. The interval Ser18–Ser38 is disordered. A helical; Signal-anchor for type II membrane protein transmembrane segment spans residues Ser49–Phe69. Topologically, residues Gln70–Leu240 are extracellular. Cystine bridges form between Cys107/Cys118, Cys140/Cys233, and Cys208/Cys225. A C-type lectin domain is found at Ser129–Met235. Ca(2+) contacts are provided by Val149 and Glu155. Asn190 carries N-linked (GlcNAc...) asparagine glycosylation. Glu200, Ser202, and Glu206 together coordinate Ca(2+). Residues Glu200–Ser202 and Glu206 each bind alpha-D-mannopyranose. Residue Ile211–His213 coordinates N-acetyl-D-glucosamine. Residues Asn221 and Asp222 each contribute to the Ca(2+) site.

In terms of assembly, may interact with PTPN6 via its ITIM site. Expressed by myeloid cells (dendritic cells, macrophages, and neutrophils) and B-cells.

It localises to the cell membrane. In terms of biological role, C-type lectin receptor that binds carbohydrates mannose and fucose but also weakly interacts with N-acetylglucosamine (GlcNAc) in a Ca(2+)-dependent manner. Involved in regulating immune reactivity. Once triggered by antigen, it is internalized by clathrin-dependent endocytosis and delivers its antigenic cargo into the antigen presentation pathway resulting in cross-priming of CD8(+) T cells. This cross-presentation and cross-priming are enhanced by TLR7 and TLR8 agonists with increased expansion of the CD8(+) T cells, high production of IFNG and TNF with reduced levels of IL4, IL5 and IL13. In plasmacytoid dendritic cells, inhibits TLR9-mediated IFNA and TNF production. May be involved via its ITIM motif (immunoreceptor tyrosine-based inhibitory motifs) in the inhibition of B-cell-receptor-mediated calcium mobilization and protein tyrosine phosphorylation. This chain is C-type lectin domain family 4 member A (Clec4a), found in Rattus norvegicus (Rat).